Consider the following 90-residue polypeptide: Probable Fe(2+)-trafficking protein (90 aa).

The protein belongs to the Fe(2+)-trafficking protein family.

Functionally, could be a mediator in iron transactions between iron acquisition and iron-requiring processes, such as synthesis and/or repair of Fe-S clusters in biosynthetic enzymes. The chain is Probable Fe(2+)-trafficking protein from Pseudomonas putida (strain W619).